Here is a 563-residue protein sequence, read N- to C-terminus: Autophagy-related protein 18 (563 aa).

WD repeat units follow at residues 36–74 (KTDD…GKCY), 247–287 (AHKS…KLFQ), and 292–331 (TYST…ALEN). Positions 288–292 (FRRGT) match the L/FRRG motif motif. Residues 329 to 430 (LENKHKKKKA…SSQAAKNEPL (102 aa)) form a disordered region. The span at 366–393 (TQDDDEFADDGDDSDEAVEGDDNDDESL) shows a compositional bias: acidic residues. Low complexity predominate over residues 404–417 (SQGSSNSFASFNSG).

Belongs to the WD repeat PROPPIN family. Component of the PI(3,5)P2 regulatory complex.

The protein localises to the preautophagosomal structure membrane. It localises to the vacuole membrane. The protein resides in the endosome membrane. The PI(3,5)P2 regulatory complex regulates both the synthesis and turnover of phosphatidylinositol 3,5-bisphosphate (PtdIns(3,5)P2). Necessary for proper vacuole morphology. Plays an important role in osmotically-induced vacuole fragmentation. Required for cytoplasm to vacuole transport (Cvt) vesicle formation, pexophagy and starvation-induced autophagy. Involved in correct ATG9 trafficking to the pre-autophagosomal structure. Might also be involved in premeiotic DNA replication. The chain is Autophagy-related protein 18 (ATG18) from Scheffersomyces stipitis (strain ATCC 58785 / CBS 6054 / NBRC 10063 / NRRL Y-11545) (Yeast).